The primary structure comprises 325 residues: Delta(1)-pyrroline-2-carboxylate reductase (325 aa).

This sequence belongs to the ornithine cyclodeaminase/mu-crystallin family.

The enzyme catalyses L-proline + NAD(+) = 1-pyrroline-2-carboxylate + NADH + H(+). It catalyses the reaction L-proline + NADP(+) = 1-pyrroline-2-carboxylate + NADPH + H(+). Functionally, catalyzes the reduction of Delta(1)-pyrroline-2-carboxylate (Pyr2C) to L-proline, using preferentially NADPH over NADH as the electron donor. Is likely involved in a degradation pathway that converts trans-3-hydroxy-L-proline (t3LHyp) to L-proline. In Bacillus cereus (strain ATCC 10987 / NRS 248), this protein is Delta(1)-pyrroline-2-carboxylate reductase.